Here is a 69-residue protein sequence, read N- to C-terminus: MKAIISLLLISAMVFSMIEAVPVEEGLQLFEGERGCLPHNRFCNALSGPRCCSGLRCKELSIWDSRCLG.

A signal peptide spans 1 to 20 (MKAIISLLLISAMVFSMIEA). Positions 21-34 (VPVEEGLQLFEGER) are excised as a propeptide. Disulfide bonds link Cys36–Cys52, Cys43–Cys57, and Cys51–Cys67. Leu68 is modified (leucine amide).

The protein belongs to the neurotoxin 01 (U2-agtx) family. In terms of tissue distribution, expressed by the venom gland.

It is found in the secreted. Insect active toxin causing rapid but reversible paralysis in crickets. No activity shown in mammals. Does not show effect on mammalian voltage-gated calcium channels. The polypeptide is U2-agatoxin-Ao1g (Agelena orientalis (Funnel-web spider)).